The primary structure comprises 360 residues: GTP 3',8-cyclase 2 (360 aa).

Residues 33–259 enclose the Radical SAM core domain; sequence TFGRVANDLR…PDPAPRGSAP (227 aa). R42 contacts GTP. C49 and C53 together coordinate [4Fe-4S] cluster. Y55 is an S-adenosyl-L-methionine binding site. A [4Fe-4S] cluster-binding site is contributed by C56. R93 serves as a coordination point for GTP. Residue G97 participates in S-adenosyl-L-methionine binding. A GTP-binding site is contributed by T124. S148 provides a ligand contact to S-adenosyl-L-methionine. K185 contributes to the GTP binding site. S-adenosyl-L-methionine is bound at residue M219. C287 and C290 together coordinate [4Fe-4S] cluster. Position 292–294 (292–294) interacts with GTP; it reads RTR. Residue C304 coordinates [4Fe-4S] cluster.

It belongs to the radical SAM superfamily. MoaA family. As to quaternary structure, monomer and homodimer. Requires [4Fe-4S] cluster as cofactor.

It carries out the reaction GTP + AH2 + S-adenosyl-L-methionine = (8S)-3',8-cyclo-7,8-dihydroguanosine 5'-triphosphate + 5'-deoxyadenosine + L-methionine + A + H(+). Its pathway is cofactor biosynthesis; molybdopterin biosynthesis. Catalyzes the cyclization of GTP to (8S)-3',8-cyclo-7,8-dihydroguanosine 5'-triphosphate. This chain is GTP 3',8-cyclase 2, found in Mycobacterium bovis (strain ATCC BAA-935 / AF2122/97).